Here is a 436-residue protein sequence, read N- to C-terminus: MHKLFKNAPFFDFEAIRILGTTCYGGADVAEVFEAVDQIKNNDPETWETAWRIQAERAEKLAAEALEHGDRDAALAGYLRASNYTRASGYMYVSRAESSGEALVQDARALPIAEKVGELFRKAIPLMKGSVHTLGIPYEEYALPGYLYLPPPWRRIPGRKIPILVNSGGADSCQEELFYLNPAAGPGQGYAVVTFDGPGQGIMLRKYGLEMRPDWEAVTGRVIDFLEEYAAENPHLELDLNCIAVSGASMGGYYALRAAADQRVKACVSIDPFYDMWDFGTAHVSPIFIHAWTSGWISGGFVDNLMALLSRLSFQLRWEISVTGTFFGLSSPSQILLHMKKYTLRSTEEEPEGFLSRVICPVLLSGAGKSLYLDVDNHTRQCYDGLVNVAERNKQLWIPESEGQGSLQAKMGAFRLCNQRTYRFLDECFGIMRKSL.

Ser-249 acts as the Nucleophile in catalysis.

Belongs to the AB hydrolase superfamily. FUS2 hydrolase family. As to quaternary structure, homodimer.

It participates in mycotoxin biosynthesis. Hydrolyase; part of the gene cluster that mediates the biosynthesis of a family of the mycotoxins cytochalasins E and K. The hybrid PKS-NRPS synthetase ccsA and the enoyl reductase ccsC are responsible for fusion of phenylalanine with an octaketide backbone and subsequent release of the stable tetramic acid precursor. The polyketide synthase module (PKS) of the PKS-NRPS ccsA is responsible for the synthesis of the octaketide backbone. The downstream nonribosomal peptide synthetase (NRPS) amidates the carboxyl end of the octaketide with a phenylalanine. A reductase-like domain (R) at the C-terminus catalyzes the reductive release of the polyketide-amino acid intermediate. Because ccsA lacks a designated enoylreductase (ER) domain, the required activity is provided the enoyl reductase ccsC. Upon formation of the 11-membered carbocycle-fused perhydroisoindolone intermediate, a number of oxidative steps are required to afford the final cytochalasin E and K, including two hydroxylations at C17 and C18, one alcohol oxidation at C17, one epoxidation at C6 and C7 and two Baeyer-Villiger oxidations. The oxidative modification at C17, C18 and the C6-C7 epoxidation are likely to be catalyzed by the two cytochrome P450 oxygenases ccsD and ccsG. CcsD may be responsible for the epoxidation of the C6-C7 double bond. CcsG may be responsible for the successive oxidative modifications at C17 and C18. The double Baeyer-Villiger oxidations of ketocytochalasin to precytochalasin and cytochalasin Z(16) are among the final steps leading to cytochalasin E and K and are catalyzed by ccsB. The first oxygen insertion step follows that of the classic BVMO mechanism, generating the ester precytochalasin. Release of precytochalasin into an aqueous environment can generate the shunt product iso-precytochalasin through spontaneous isomerization. Alternatively, precytochalasin can undergo further oxidation by ccsB to yield the in-line carbonate-containing cytochalasin Z(16). Cytochalasin Z(16) is a precursor to cytochalasin E and cytochalasin K, whereas iso-precytochalasin is a precursor to cytochalasin Z(17) and rosellichalasin. The hydrolyase ccsE may catalyze hydrolysis of epoxide bond in cytochalasin E to afford cytochalasin K. The function of ccsF has not been assigned but it may play a role in post-PKS-NRPS biosynthetic step, resistance or transport of cytochalasins and related PKS-NRPS products. The sequence is that of Hydrolyase ccsE from Aspergillus clavatus (strain ATCC 1007 / CBS 513.65 / DSM 816 / NCTC 3887 / NRRL 1 / QM 1276 / 107).